Here is a 321-residue protein sequence, read N- to C-terminus: Lipoyl synthase (321 aa).

[4Fe-4S] cluster-binding residues include Cys-68, Cys-73, Cys-79, Cys-94, Cys-98, Cys-101, and Ser-308. Positions 80-297 (FNHGTATFMI…KAEALAMGFT (218 aa)) constitute a Radical SAM core domain.

This sequence belongs to the radical SAM superfamily. Lipoyl synthase family. Requires [4Fe-4S] cluster as cofactor.

Its subcellular location is the cytoplasm. It carries out the reaction [[Fe-S] cluster scaffold protein carrying a second [4Fe-4S](2+) cluster] + N(6)-octanoyl-L-lysyl-[protein] + 2 oxidized [2Fe-2S]-[ferredoxin] + 2 S-adenosyl-L-methionine + 4 H(+) = [[Fe-S] cluster scaffold protein] + N(6)-[(R)-dihydrolipoyl]-L-lysyl-[protein] + 4 Fe(3+) + 2 hydrogen sulfide + 2 5'-deoxyadenosine + 2 L-methionine + 2 reduced [2Fe-2S]-[ferredoxin]. It participates in protein modification; protein lipoylation via endogenous pathway; protein N(6)-(lipoyl)lysine from octanoyl-[acyl-carrier-protein]: step 2/2. Catalyzes the radical-mediated insertion of two sulfur atoms into the C-6 and C-8 positions of the octanoyl moiety bound to the lipoyl domains of lipoate-dependent enzymes, thereby converting the octanoylated domains into lipoylated derivatives. In Salmonella typhi, this protein is Lipoyl synthase.